We begin with the raw amino-acid sequence, 25 residues long: Xenoposin precursor fragment R2 (25 aa).

As to expression, expressed by the skin glands.

Its subcellular location is the secreted. In terms of biological role, antimicrobial peptide. In Xenopus ruwenzoriensis (Uganda clawed frog), this protein is Xenoposin precursor fragment R2.